A 263-amino-acid polypeptide reads, in one-letter code: Endonuclease 8 (263 aa).

Proline 2 serves as the catalytic Schiff-base intermediate with DNA. Glutamate 3 serves as the catalytic Proton donor. The Proton donor; for beta-elimination activity role is filled by lysine 53. Positions 70, 125, and 169 each coordinate DNA. An FPG-type zinc finger spans residues 229–263 (KVFHRDGEPCERCGGIIEKTTLSSRPFYWCPGCQH). The Proton donor; for delta-elimination activity role is filled by arginine 253.

Belongs to the FPG family. The cofactor is Zn(2+).

The enzyme catalyses 2'-deoxyribonucleotide-(2'-deoxyribose 5'-phosphate)-2'-deoxyribonucleotide-DNA = a 3'-end 2'-deoxyribonucleotide-(2,3-dehydro-2,3-deoxyribose 5'-phosphate)-DNA + a 5'-end 5'-phospho-2'-deoxyribonucleoside-DNA + H(+). Its function is as follows. Involved in base excision repair of DNA damaged by oxidation or by mutagenic agents. Acts as a DNA glycosylase that recognizes and removes damaged bases. Has a preference for oxidized pyrimidines, such as thymine glycol, 5,6-dihydrouracil and 5,6-dihydrothymine. Has AP (apurinic/apyrimidinic) lyase activity and introduces nicks in the DNA strand. Cleaves the DNA backbone by beta-delta elimination to generate a single-strand break at the site of the removed base with both 3'- and 5'-phosphates. In Escherichia coli O6:K15:H31 (strain 536 / UPEC), this protein is Endonuclease 8.